The primary structure comprises 634 residues: 3-dehydroshikimate dehydratase (634 aa).

E134, D165, Q191, and E239 together coordinate a divalent metal cation. 2 consecutive VOC domains span residues 295–414 (GIEF…LVER) and 440–590 (RVDH…VFTE). H443, H521, and E599 together coordinate Mg(2+).

The protein belongs to the bacterial two-domain DSD family. As to quaternary structure, homodimer. Requires Co(2+) as cofactor. Ni(2+) serves as cofactor. The cofactor is Mg(2+). Mn(2+) is required as a cofactor.

The catalysed reaction is 3-dehydroshikimate = 3,4-dihydroxybenzoate + H2O. The protein operates within aromatic compound metabolism; 3,4-dihydroxybenzoate biosynthesis. Catalyzes the conversion of 3-dehydroshikimate to protocatechuate (3,4-dihydroxybenzoate), a common intermediate of quinate and shikimate degradation pathways. Is required for growth on either quinate or shikimate as a sole carbon source. This chain is 3-dehydroshikimate dehydratase, found in Pseudomonas aeruginosa (strain ATCC 15692 / DSM 22644 / CIP 104116 / JCM 14847 / LMG 12228 / 1C / PRS 101 / PAO1).